Here is a 363-residue protein sequence, read N- to C-terminus: 2,5-diketocamphane 1,2-monooxygenase 2 (363 aa).

Residues Met74 and 186–194 (TGLTKNSSS) each bind FMN.

It belongs to the bacterial luciferase oxidoreductase family. Homodimer. Likely forms a loose transient complex with a P.putida flavin reductase that provides the required FMNH(2) to the enzyme.

It catalyses the reaction (1R,4R)-bornane-2,5-dione + FMNH2 + O2 = (1R,4R)-5-oxo-1,2-campholide + FMN + H2O + H(+). It participates in terpene metabolism; (R)-camphor degradation. In terms of biological role, involved in the degradation and assimilation of (+)-camphor, which allows P.putida strain NCIMB 10007 to grow on this enantiomer of camphor as the sole carbon source. Catalyzes the FMNH(2)-dependent lactonization of 2,5-diketocamphane via a Baeyer-Villiger oxidation to produce the unstable lactone 5-oxo-1,2-campholide with (R,R) configuration, that presumably undergoes spontaneous hydrolysis to form 2-oxo-Delta(3)-4,5,5-trimethylcyclopentenylacetate. Is also able to convert (+)-camphor and norcamphor to the corresponding lactone in vitro. Shows no conversion of (-)-camphor, (+)-fenchone, (-)-fenchone, and (+)-nopinone. Acts on other bicyclic ketones and, to a lesser extent, on some 2- and 4-substituted monocyclic ketones. This is 2,5-diketocamphane 1,2-monooxygenase 2 from Pseudomonas putida (Arthrobacter siderocapsulatus).